A 381-amino-acid chain; its full sequence is NF-kappa-B inhibitor-like protein 1 (381 aa).

The tract at residues Met-1–Arg-34 is disordered. Polar residues predominate over residues Ser-14–Ser-27. 2 ANK repeats span residues Ala-64–Ala-93 and Arg-97–Lys-134. 2 disordered regions span residues Lys-132–Arg-167 and Glu-186–Gly-298. Ser-151 carries the post-translational modification Phosphoserine. Over residues Ser-151–Val-160 the composition is skewed to acidic residues. Composition is skewed to basic and acidic residues over residues Arg-205–Leu-218 and Arg-237–Glu-290.

Interacts with CACTIN (via N-terminal domain); the interaction occurs in a pro-inflammatory-independent manner. High expression found in heart muscle, liver, kidney and skin. Not detected in spleen, lung and brain.

Its subcellular location is the nucleus. In terms of biological role, involved in the regulation of innate immune response. Acts as negative regulator of Toll-like receptor and interferon-regulatory factor (IRF) signaling pathways. Contributes to the negative regulation of transcriptional activation of NF-kappa-B target genes in response to endogenous pro-inflammatory stimuli. This is NF-kappa-B inhibitor-like protein 1 (Nfkbil1) from Mus musculus (Mouse).